A 236-amino-acid chain; its full sequence is Ribose-5-phosphate isomerase A (236 aa).

Residues 29–32, 86–89, and 99–102 contribute to the substrate site; these read SGST, DGAD, and KGGG. Glu-108 (proton acceptor) is an active-site residue. Lys-126 serves as a coordination point for substrate.

Belongs to the ribose 5-phosphate isomerase family. In terms of assembly, homodimer.

It catalyses the reaction aldehydo-D-ribose 5-phosphate = D-ribulose 5-phosphate. It participates in carbohydrate degradation; pentose phosphate pathway; D-ribose 5-phosphate from D-ribulose 5-phosphate (non-oxidative stage): step 1/1. In terms of biological role, catalyzes the reversible conversion of ribose-5-phosphate to ribulose 5-phosphate. In Prochlorococcus marinus (strain NATL2A), this protein is Ribose-5-phosphate isomerase A.